Consider the following 309-residue polypeptide: Probable copper-dependent oxygenase clz3 (309 aa).

Residues asparagine 9 and asparagine 249 are each glycosylated (N-linked (GlcNAc...) asparagine). Residues 257–277 form a helical membrane-spanning segment; that stretch reads FAVPLAAIAFIALIISGGYVI.

It belongs to the clz3 oxygenase family.

The protein localises to the membrane. The protein operates within secondary metabolite biosynthesis. Probable copper-dependent oxygenase; part of the gene cluster that mediates the biosynthesis of squalestatin S1 (SQS1, also known as zaragozic acid A), a heavily oxidized fungal polyketide that offers potent cholesterol lowering activity by targeting squalene synthase (SS). SQS1 is composed of a 2,8-dioxobicyclic[3.2.1]octane-3,4,5-tricarboxyclic acid core that is connected to two lipophilic polyketide arms. These initial steps feature the priming of an unusual benzoic acid starter unit onto the highly reducing polyketide synthase clz14, followed by oxaloacetate extension and product release to generate a tricarboxylic acid containing product. The phenylalanine ammonia lyase (PAL) clz10 and the acyl-CoA ligase clz12 are involved in transforming phenylalanine into benzoyl-CoA. The citrate synthase-like protein clz17 is involved in connecting the C-alpha-carbons of the hexaketide chain and oxaloacetate to afford the tricarboxylic acid unit. The potential hydrolytic enzymes, clz11 and clz13, are in close proximity to pks2 and may participate in product release. On the other side, the tetraketide arm is synthesized by a the squalestatin tetraketide synthase clz2 and enzymatically esterified to the core in the last biosynthetic step, by the acetyltransferase clz6. The biosynthesis of the tetraketide must involve 3 rounds of chain extension. After the first and second rounds methyl-transfer occurs, and in all rounds of extension the ketoreductase and dehydratase are active. The enoyl reductase and C-MeT of clz2 are not active in the final round of extension. The acetyltransferase clz6 appears to have a broad substrate selectivity for its acyl CoA substrate, allowing the in vitro synthesis of novel squalestatins. The biosynthesis of SQS1 requires several oxidative steps likely performed by oxidoreductases clz3, clz15 and clz16. Finally, in support of the identification of the cluster as being responsible for SQS1 production, the cluster contains a gene encoding a putative squalene synthase (SS) clz20, suggesting a likely mechanism for self-resistance. The chain is Probable copper-dependent oxygenase clz3 from Cochliobolus lunatus (Filamentous fungus).